Reading from the N-terminus, the 231-residue chain is Ribose-5-phosphate isomerase A (231 aa).

Substrate is bound by residues 28–31 (TGST), 83–86 (DGAD), and 96–99 (KGGG). Glu-105 (proton acceptor) is an active-site residue. A substrate-binding site is contributed by Lys-123.

Belongs to the ribose 5-phosphate isomerase family. Homodimer.

The enzyme catalyses aldehydo-D-ribose 5-phosphate = D-ribulose 5-phosphate. It functions in the pathway carbohydrate degradation; pentose phosphate pathway; D-ribose 5-phosphate from D-ribulose 5-phosphate (non-oxidative stage): step 1/1. Functionally, catalyzes the reversible conversion of ribose-5-phosphate to ribulose 5-phosphate. The sequence is that of Ribose-5-phosphate isomerase A from Agrobacterium fabrum (strain C58 / ATCC 33970) (Agrobacterium tumefaciens (strain C58)).